A 672-amino-acid polypeptide reads, in one-letter code: DNA ligase (672 aa).

NAD(+)-binding positions include 35–39, 84–85, and Glu116; these read DAEYD and SL. Lys118 functions as the N6-AMP-lysine intermediate in the catalytic mechanism. NAD(+)-binding residues include Arg139, Glu179, Lys295, and Lys319. Zn(2+) contacts are provided by Cys413, Cys416, Cys431, and Cys436. One can recognise a BRCT domain in the interval 593-672; sequence PRSAPLTGKT…EEFLRLAGKI (80 aa).

This sequence belongs to the NAD-dependent DNA ligase family. LigA subfamily. Mg(2+) is required as a cofactor. It depends on Mn(2+) as a cofactor.

The enzyme catalyses NAD(+) + (deoxyribonucleotide)n-3'-hydroxyl + 5'-phospho-(deoxyribonucleotide)m = (deoxyribonucleotide)n+m + AMP + beta-nicotinamide D-nucleotide.. Its function is as follows. DNA ligase that catalyzes the formation of phosphodiester linkages between 5'-phosphoryl and 3'-hydroxyl groups in double-stranded DNA using NAD as a coenzyme and as the energy source for the reaction. It is essential for DNA replication and repair of damaged DNA. In Syntrophus aciditrophicus (strain SB), this protein is DNA ligase.